The chain runs to 248 residues: uncharacterized protein (248 aa).

9–33 (IITGASSGIGKATALLLAEKGAKLV) lines the NADP(+) pocket. Residue serine 141 coordinates substrate. The active-site Proton acceptor is tyrosine 154.

The protein belongs to the short-chain dehydrogenases/reductases (SDR) family.

This is an uncharacterized protein from Listeria monocytogenes serovar 1/2a (strain ATCC BAA-679 / EGD-e).